The following is a 188-amino-acid chain: MDMITLFGLALALAMDAFAVALGCGLTLERLTGRHLFRLGWHFGLFQAMMPIIGWLAGLTVQKWIETYDHWVAFGLLVCVGGKMIHEAFQDEETRESRDDPTRGMSLIMLSVATSIDALAVGLSLAIVGISVWFPALIIGIIAGVMTVIGMLLGRRAGARWGQRVEIAGGLILIGIGLKILWEHTLGM.

6 helical membrane passes run 3–23 (MITL…VALG), 39–59 (LGWH…LAGL), 65–85 (IETY…GKMI), 104–124 (GMSL…VGLS), 125–145 (LAIV…IAGV), and 167–187 (IAGG…HTLG).

The protein belongs to the MntP (TC 9.B.29) family.

The protein resides in the cell inner membrane. In terms of biological role, probably functions as a manganese efflux pump. The protein is Putative manganese efflux pump MntP of Syntrophotalea carbinolica (strain DSM 2380 / NBRC 103641 / GraBd1) (Pelobacter carbinolicus).